The following is a 226-amino-acid chain: Phosphoglycolate phosphatase (226 aa).

Aspartate 9 (nucleophile) is an active-site residue. Mg(2+)-binding residues include aspartate 9 and aspartate 11. Position 150 (lysine 150) interacts with substrate. Aspartate 173 and aspartate 177 together coordinate Mg(2+).

The protein belongs to the archaeal SPP-like hydrolase family. It depends on Mg(2+) as a cofactor.

It catalyses the reaction 2-phosphoglycolate + H2O = glycolate + phosphate. Catalyzes the dephosphorylation of 2-phosphoglycolate. The polypeptide is Phosphoglycolate phosphatase (Methanosarcina mazei (strain ATCC BAA-159 / DSM 3647 / Goe1 / Go1 / JCM 11833 / OCM 88) (Methanosarcina frisia)).